Here is a 122-residue protein sequence, read N- to C-terminus: Small ribosomal subunit protein uS13 (122 aa).

The disordered stretch occupies residues arginine 99 to lysine 122.

This sequence belongs to the universal ribosomal protein uS13 family. Part of the 30S ribosomal subunit. Forms a loose heterodimer with protein S19. Forms two bridges to the 50S subunit in the 70S ribosome.

Located at the top of the head of the 30S subunit, it contacts several helices of the 16S rRNA. In the 70S ribosome it contacts the 23S rRNA (bridge B1a) and protein L5 of the 50S subunit (bridge B1b), connecting the 2 subunits; these bridges are implicated in subunit movement. Contacts the tRNAs in the A and P-sites. This Rhizobium etli (strain ATCC 51251 / DSM 11541 / JCM 21823 / NBRC 15573 / CFN 42) protein is Small ribosomal subunit protein uS13.